The primary structure comprises 250 residues: 5'-nucleotidase SurE (250 aa).

A divalent metal cation-binding residues include Asp-8, Asp-9, Ser-39, and Asn-92.

The protein belongs to the SurE nucleotidase family. Requires a divalent metal cation as cofactor.

The protein resides in the cytoplasm. The enzyme catalyses a ribonucleoside 5'-phosphate + H2O = a ribonucleoside + phosphate. Functionally, nucleotidase that shows phosphatase activity on nucleoside 5'-monophosphates. The polypeptide is 5'-nucleotidase SurE (Vibrio cholerae serotype O1 (strain ATCC 39315 / El Tor Inaba N16961)).